A 570-amino-acid polypeptide reads, in one-letter code: Phosphoenolpyruvate-protein phosphotransferase (570 aa).

His189 serves as the catalytic Tele-phosphohistidine intermediate. Residues Arg296 and Arg332 each coordinate phosphoenolpyruvate. Mg(2+) is bound by residues Glu431 and Asp455. Residues 454–455 (ND) and Arg465 contribute to the phosphoenolpyruvate site. Cys502 acts as the Proton donor in catalysis.

Belongs to the PEP-utilizing enzyme family. Homodimer. Mg(2+) serves as cofactor.

The protein resides in the cytoplasm. The catalysed reaction is L-histidyl-[protein] + phosphoenolpyruvate = N(pros)-phospho-L-histidyl-[protein] + pyruvate. Functionally, general (non sugar-specific) component of the phosphoenolpyruvate-dependent sugar phosphotransferase system (sugar PTS). This major carbohydrate active-transport system catalyzes the phosphorylation of incoming sugar substrates concomitantly with their translocation across the cell membrane. Enzyme I transfers the phosphoryl group from phosphoenolpyruvate (PEP) to the phosphoryl carrier protein (HPr). The chain is Phosphoenolpyruvate-protein phosphotransferase (ptsI) from Buchnera aphidicola subsp. Schizaphis graminum (strain Sg).